The chain runs to 704 residues: Polyribonucleotide nucleotidyltransferase (704 aa).

Mg(2+) contacts are provided by D488 and D494. Residues 555-614 enclose the KH domain; sequence PRITTLKINPEKIRDVIGKGGATIRALTEETGTTIELEDDGTVKIASANGDATKEAIRRI. The region spanning 624-692 is the S1 motif domain; the sequence is GTIYNGKVVR…RQGRVRLSMK (69 aa).

The protein belongs to the polyribonucleotide nucleotidyltransferase family. As to quaternary structure, component of the RNA degradosome, which is a multiprotein complex involved in RNA processing and mRNA degradation. The cofactor is Mg(2+).

The protein resides in the cytoplasm. The enzyme catalyses RNA(n+1) + phosphate = RNA(n) + a ribonucleoside 5'-diphosphate. Functionally, involved in mRNA degradation. Catalyzes the phosphorolysis of single-stranded polyribonucleotides processively in the 3'- to 5'-direction. In Shewanella sediminis (strain HAW-EB3), this protein is Polyribonucleotide nucleotidyltransferase.